The primary structure comprises 67 residues: Phycobilisome 7.8 kDa linker polypeptide, allophycocyanin-associated, core (67 aa).

The CpcD-like domain occupies 1-56 (MRVFKVTACVPSQTRIRTQRELQNTYFTKLVPYDNWFREQQRIMKMGGKIVKVELA).

The protein belongs to the phycobilisome linker protein family.

It localises to the cellular thylakoid membrane. Rod linker protein, associated with allophycocyanin. Linker polypeptides determine the state of aggregation and the location of the disk-shaped phycobiliprotein units within the phycobilisome and modulate their spectroscopic properties in order to mediate a directed and optimal energy transfer. The sequence is that of Phycobilisome 7.8 kDa linker polypeptide, allophycocyanin-associated, core (apcC) from Arthrospira platensis (Spirulina platensis).